The chain runs to 379 residues: Cytochrome b (379 aa).

Helical transmembrane passes span 33–53 (FGSL…FLAM), 77–98 (WLIR…FIHV), 113–133 (WNIG…GYVL), and 178–198 (FFAF…VHLL). Heme b contacts are provided by His-83 and His-97. Heme b is bound by residues His-182 and His-196. A ubiquinone is bound at residue His-201. 4 helical membrane passes run 226 to 246 (TKDL…ALFF), 288 to 308 (LGGV…PLLN), 320 to 340 (VTQI…WIGG), and 347 to 367 (FTTI…ILIP).

It belongs to the cytochrome b family. As to quaternary structure, the cytochrome bc1 complex contains 11 subunits: 3 respiratory subunits (MT-CYB, CYC1 and UQCRFS1), 2 core proteins (UQCRC1 and UQCRC2) and 6 low-molecular weight proteins (UQCRH/QCR6, UQCRB/QCR7, UQCRQ/QCR8, UQCR10/QCR9, UQCR11/QCR10 and a cleavage product of UQCRFS1). This cytochrome bc1 complex then forms a dimer. Heme b serves as cofactor.

Its subcellular location is the mitochondrion inner membrane. Functionally, component of the ubiquinol-cytochrome c reductase complex (complex III or cytochrome b-c1 complex) that is part of the mitochondrial respiratory chain. The b-c1 complex mediates electron transfer from ubiquinol to cytochrome c. Contributes to the generation of a proton gradient across the mitochondrial membrane that is then used for ATP synthesis. This Akodon reigi (Reig's grass mouse) protein is Cytochrome b (MT-CYB).